A 1396-amino-acid polypeptide reads, in one-letter code: MEDIFSLFERPKDPLSFNAIRLSLVSPEKIRERSFGEVKKPETINYRTFKPERDGLFCAKIFGPTKDYECNCGKYKRMKHRGIVCEKCGVEVIPSKVRRERLGHIDLACPVAHIWFLKSLPSRIATLLDMTLKEVERVLYFEAYLVLDAGDTPLFRGQLLTEDKYAETMEEYAGQFVATMGAEAIRDFLLSIDIEELSTVLRKEMSEAASEAKRKKVAKRLKVVEAFKFSGNRPEWLILETIPVLPPELRPLVPLDGGRFATSDLNDLYRRVINRNNRLKRLMELRAPEVIIRNEKRMLQEAVDALFDNGRRGRAITGPNKRPLKSLSDMLKGKGGRFRQNLLGKRVDYSGRSVIVVGPELKLHQCGLPKKMALELFKPFIYNKLEERGFCTTIKSAKKMVEKEKSEVWDVLEEVIKEHPVMLNRAPTLHRLGIQAFEPVLIEGKAIQLHPLVCTAFNADFDGDQMAVHLPLSIESQIETRVLMMSTNNILSPAHGKPIIVPSQDMILGLYYMTRERAFARGEGKILSSRDELRMAYDAGEIDLQAKIKVRMSPALGEPETLVETTTGRVLLRDVVPEVIPFDYINVVMAKKHVANLIDVCFRLAGNKETVLLADKLKDTGYRFSTMAGISICLDDMVIPESKDVLMKAAVEEVTEIQKQYTEGLITDGERYNKVIDIWAKCTEDIAQTMLDTLSKDEIVSPEGEAVKVPSFNSIHMMADSGARGSAQQIRQLAGMRGLMAKPSGEIIETPITANFREGLTVLQYFISTHGARKGLADTALKTANSGYLTRRLVDVAQDAIITEQDCDSLDGIVMTALTEGGEVIERLGDRILGRTALEDVLDPVTGEVLVEANQQIDETLVEKIENAGIEKVKIRSVLTCQSQRGICATCYGRDLARGHLVNLGEAVGVIAAQSIGEPGTQLTMRTFHIGGTASRRAEQTSLEARFDGFVKYLNLNSVLDAEGFHVVMNRNAEIAVVDETGRERERYGVVYGARLRINPDAPVQAGSLLAEWDPYTMPILTEIAGTVRFGDILEGVSMEEQVDEVTGLSRKVVIESKGADKRPRITLKDSEGKTAKLPNGAPARYMLPVGAIIVASEDETVSGGAILAKIPRETTKTKDITGGLPRVAELFEARKPKEYAIISEIDGVVSFGKDSKGKRKVHVTPEVGSPKEYLIPKGKHISVHEGDHIKAGEALMDGSSNPHDILRVLGEKELAKYLVDEVQEVYRLQGVKINDKHIEVIVRQMLRRVRIKEPGNTRFLADDQVERWEFECENRKVVGEGGAPAVGEPLMLGITKASLSTESFISAASFQETTKVLTQAAIEGKIDYLRGLKENVIMGRLIPAGTGISKYRSAHLLIEEPEEIEEPVPEDLEDETAGADSAQAASEESVAEGKD.

Positions 70, 72, 85, and 88 each coordinate Zn(2+). Residues aspartate 460, aspartate 462, and aspartate 464 each contribute to the Mg(2+) site. Residues cysteine 807, cysteine 881, cysteine 888, and cysteine 891 each contribute to the Zn(2+) site. Residues 1361-1378 (EPEEIEEPVPEDLEDETA) are compositionally biased toward acidic residues. Residues 1361–1396 (EPEEIEEPVPEDLEDETAGADSAQAASEESVAEGKD) form a disordered region. The span at 1379–1389 (GADSAQAASEE) shows a compositional bias: low complexity.

This sequence belongs to the RNA polymerase beta' chain family. The RNAP catalytic core consists of 2 alpha, 1 beta, 1 beta' and 1 omega subunit. When a sigma factor is associated with the core the holoenzyme is formed, which can initiate transcription. Mg(2+) is required as a cofactor. Requires Zn(2+) as cofactor.

The catalysed reaction is RNA(n) + a ribonucleoside 5'-triphosphate = RNA(n+1) + diphosphate. DNA-dependent RNA polymerase catalyzes the transcription of DNA into RNA using the four ribonucleoside triphosphates as substrates. The protein is DNA-directed RNA polymerase subunit beta' of Syntrophotalea carbinolica (strain DSM 2380 / NBRC 103641 / GraBd1) (Pelobacter carbinolicus).